Reading from the N-terminus, the 115-residue chain is Regulator of ribonuclease activity B (115 aa).

It belongs to the RraB family. Interacts with the C-terminal region of Rne.

It is found in the cytoplasm. Globally modulates RNA abundance by binding to RNase E (Rne) and regulating its endonucleolytic activity. Can modulate Rne action in a substrate-dependent manner by altering the composition of the degradosome. The polypeptide is Regulator of ribonuclease activity B (Aeromonas hydrophila subsp. hydrophila (strain ATCC 7966 / DSM 30187 / BCRC 13018 / CCUG 14551 / JCM 1027 / KCTC 2358 / NCIMB 9240 / NCTC 8049)).